A 229-amino-acid chain; its full sequence is Galactonate operon transcriptional repressor (229 aa).

The HTH gntR-type domain maps to 1 to 71; that stretch reads MTLNKTDRIV…RYRGAFVAPR (71 aa). A DNA-binding region (H-T-H motif) is located at residues 31–50; it reads EAELCEEFATSRNIIREVFR. 3 residues coordinate Zn(2+): aspartate 146, histidine 150, and histidine 195.

As to quaternary structure, homodimer.

With respect to regulation, D-galactonate binds DgoR and induces a conformational change in the protein, which decreases its affinity for DNA and consequently derepresses transcription of the dgoRKADT operon. Involved in the regulation of D-galactonate metabolism. Represses the expression of the dgoRKADT operon by binding to two closely spaced inverted repeats in the cis-acting element, which overlap with the D-galactonate responsive dgo promoter. Employs a derepression mechanism using D-galactonate as a specific effector molecule. The sequence is that of Galactonate operon transcriptional repressor from Escherichia coli (strain K12).